The chain runs to 901 residues: Protein translocase subunit SecA (901 aa).

Residues Q89, 107–111, and D502 contribute to the ATP site; that span reads GEGKT. Residues 838-883 form a disordered region; that stretch reads YQQQQAETEAQMHPEHEEAEGGEVSGRVAGFDETDPTTWGNPSRND. Residues C885, C887, C896, and H897 each contribute to the Zn(2+) site.

The protein belongs to the SecA family. As to quaternary structure, monomer and homodimer. Part of the essential Sec protein translocation apparatus which comprises SecA, SecYEG and auxiliary proteins SecDF-YajC and YidC. Zn(2+) serves as cofactor.

It is found in the cell inner membrane. The protein localises to the cytoplasm. It carries out the reaction ATP + H2O + cellular proteinSide 1 = ADP + phosphate + cellular proteinSide 2.. Part of the Sec protein translocase complex. Interacts with the SecYEG preprotein conducting channel. Has a central role in coupling the hydrolysis of ATP to the transfer of proteins into and across the cell membrane, serving both as a receptor for the preprotein-SecB complex and as an ATP-driven molecular motor driving the stepwise translocation of polypeptide chains across the membrane. The polypeptide is Protein translocase subunit SecA (Paracoccus denitrificans (strain Pd 1222)).